The chain runs to 117 residues: Large ribosomal subunit protein uL18 (117 aa).

The protein belongs to the universal ribosomal protein uL18 family. As to quaternary structure, part of the 50S ribosomal subunit; part of the 5S rRNA/L5/L18/L25 subcomplex. Contacts the 5S and 23S rRNAs.

Functionally, this is one of the proteins that bind and probably mediate the attachment of the 5S RNA into the large ribosomal subunit, where it forms part of the central protuberance. This Aeromonas salmonicida (strain A449) protein is Large ribosomal subunit protein uL18.